We begin with the raw amino-acid sequence, 248 residues long: 4-hydroxy-tetrahydrodipicolinate reductase (248 aa).

NAD(+) is bound by residues 74-76 and 99-102; these read GTT and SANF. The Proton donor/acceptor role is filled by His134. A (S)-2,3,4,5-tetrahydrodipicolinate-binding site is contributed by His135. Lys138 (proton donor) is an active-site residue. A (S)-2,3,4,5-tetrahydrodipicolinate-binding site is contributed by 144–145; that stretch reads GT.

It belongs to the DapB family.

The protein localises to the cytoplasm. It carries out the reaction (S)-2,3,4,5-tetrahydrodipicolinate + NAD(+) + H2O = (2S,4S)-4-hydroxy-2,3,4,5-tetrahydrodipicolinate + NADH + H(+). The enzyme catalyses (S)-2,3,4,5-tetrahydrodipicolinate + NADP(+) + H2O = (2S,4S)-4-hydroxy-2,3,4,5-tetrahydrodipicolinate + NADPH + H(+). It functions in the pathway amino-acid biosynthesis; L-lysine biosynthesis via DAP pathway; (S)-tetrahydrodipicolinate from L-aspartate: step 4/4. Functionally, catalyzes the conversion of 4-hydroxy-tetrahydrodipicolinate (HTPA) to tetrahydrodipicolinate. This is 4-hydroxy-tetrahydrodipicolinate reductase from Chlorobium phaeobacteroides (strain DSM 266 / SMG 266 / 2430).